A 244-amino-acid polypeptide reads, in one-letter code: Putative esophageal gland cell secretory protein 6 (244 aa).

The first 22 residues, 1-22, serve as a signal peptide directing secretion; the sequence is MDRRFTVFLVIALVTSIYEVLS. A disulfide bond links C88 and C91.

The protein belongs to the SelWTH family. SELT subfamily.

The chain is Putative esophageal gland cell secretory protein 6 (HSP6) from Heterodera glycines (Soybean cyst nematode worm).